A 1061-amino-acid chain; its full sequence is DNA polymerase (1061 aa).

Residues 773 to 792 (NSEAEESDEDQGPAPFYSPP) are disordered.

Belongs to the DNA polymerase type-B family. In terms of assembly, heterodimer with the terminal protein; this heterodimer binds to bp 9 to 18 of the genome. Forms a complex with viral pTP, DBP and hosts NFIA and POU2F1/OCT1 for initiation of replication.

It is found in the host nucleus. It carries out the reaction DNA(n) + a 2'-deoxyribonucleoside 5'-triphosphate = DNA(n+1) + diphosphate. Eukaryotic-type DNA polymerase involved in viral genomic replication. DNA synthesis is protein primed, and acts in a strand displacement replication. Assembles in complex with viral pTP, DBP, host NFIA and host POU2F1/OCT1 on viral origin of replication. The polymerase covalently transfers dCMP onto pTP, thereby initiating complementary strand synthesis. The sequence is that of DNA polymerase from Human adenovirus A serotype 12 (HAdV-12).